Reading from the N-terminus, the 124-residue chain is ATP synthase epsilon chain (124 aa).

This sequence belongs to the ATPase epsilon chain family. As to quaternary structure, F-type ATPases have 2 components, CF(1) - the catalytic core - and CF(0) - the membrane proton channel. CF(1) has five subunits: alpha(3), beta(3), gamma(1), delta(1), epsilon(1). CF(0) has three main subunits: a, b and c.

The protein localises to the cell membrane. In terms of biological role, produces ATP from ADP in the presence of a proton gradient across the membrane. In Corynebacterium efficiens (strain DSM 44549 / YS-314 / AJ 12310 / JCM 11189 / NBRC 100395), this protein is ATP synthase epsilon chain.